The following is a 263-amino-acid chain: Small ribosomal subunit protein eS4 (263 aa).

Positions 42-104 (LPLIIFLRNK…TGENFRLIYD (63 aa)) constitute an S4 RNA-binding domain. Residue K230 forms a Glycyl lysine isopeptide (Lys-Gly) (interchain with G-Cter in SUMO2) linkage. N6-acetyllysine is present on K233.

Belongs to the eukaryotic ribosomal protein eS4 family. In terms of assembly, component of the small ribosomal subunit. Part of the small subunit (SSU) processome, composed of more than 70 proteins and the RNA chaperone small nucleolar RNA (snoRNA) U3. Identified in a IGF2BP1-dependent mRNP granule complex containing untranslated mRNAs.

It localises to the cytoplasm. Its subcellular location is the nucleus. The protein resides in the nucleolus. Component of the small ribosomal subunit. The ribosome is a large ribonucleoprotein complex responsible for the synthesis of proteins in the cell. Part of the small subunit (SSU) processome, first precursor of the small eukaryotic ribosomal subunit. During the assembly of the SSU processome in the nucleolus, many ribosome biogenesis factors, an RNA chaperone and ribosomal proteins associate with the nascent pre-rRNA and work in concert to generate RNA folding, modifications, rearrangements and cleavage as well as targeted degradation of pre-ribosomal RNA by the RNA exosome. In Oryctolagus cuniculus (Rabbit), this protein is Small ribosomal subunit protein eS4 (RPS4X).